We begin with the raw amino-acid sequence, 151 residues long: Small ribosomal subunit protein uS9 (151 aa).

This sequence belongs to the universal ribosomal protein uS9 family.

The polypeptide is Small ribosomal subunit protein uS9 (rps9) (Aeropyrum pernix (strain ATCC 700893 / DSM 11879 / JCM 9820 / NBRC 100138 / K1)).